We begin with the raw amino-acid sequence, 250 residues long: 5'-nucleotidase SurE (250 aa).

A divalent metal cation contacts are provided by D9, D10, S40, and N92.

It belongs to the SurE nucleotidase family. A divalent metal cation is required as a cofactor.

Its subcellular location is the cytoplasm. It catalyses the reaction a ribonucleoside 5'-phosphate + H2O = a ribonucleoside + phosphate. Nucleotidase that shows phosphatase activity on nucleoside 5'-monophosphates. In Shewanella pealeana (strain ATCC 700345 / ANG-SQ1), this protein is 5'-nucleotidase SurE.